A 275-amino-acid chain; its full sequence is 2,3,4,5-tetrahydropyridine-2,6-dicarboxylate N-succinyltransferase (275 aa).

This sequence belongs to the transferase hexapeptide repeat family.

The protein localises to the cytoplasm. It carries out the reaction (S)-2,3,4,5-tetrahydrodipicolinate + succinyl-CoA + H2O = (S)-2-succinylamino-6-oxoheptanedioate + CoA. It participates in amino-acid biosynthesis; L-lysine biosynthesis via DAP pathway; LL-2,6-diaminopimelate from (S)-tetrahydrodipicolinate (succinylase route): step 1/3. This is 2,3,4,5-tetrahydropyridine-2,6-dicarboxylate N-succinyltransferase from Paraburkholderia phytofirmans (strain DSM 17436 / LMG 22146 / PsJN) (Burkholderia phytofirmans).